The chain runs to 353 residues: UDP-N-acetylglucosamine--N-acetylmuramyl-(pentapeptide) pyrophosphoryl-undecaprenol N-acetylglucosamine transferase (353 aa).

UDP-N-acetyl-alpha-D-glucosamine contacts are provided by residues 10-12 (TGG), asparagine 124, serine 183, and glutamine 283.

This sequence belongs to the glycosyltransferase 28 family. MurG subfamily.

The protein localises to the cell inner membrane. The enzyme catalyses di-trans,octa-cis-undecaprenyl diphospho-N-acetyl-alpha-D-muramoyl-L-alanyl-D-glutamyl-meso-2,6-diaminopimeloyl-D-alanyl-D-alanine + UDP-N-acetyl-alpha-D-glucosamine = di-trans,octa-cis-undecaprenyl diphospho-[N-acetyl-alpha-D-glucosaminyl-(1-&gt;4)]-N-acetyl-alpha-D-muramoyl-L-alanyl-D-glutamyl-meso-2,6-diaminopimeloyl-D-alanyl-D-alanine + UDP + H(+). The protein operates within cell wall biogenesis; peptidoglycan biosynthesis. Its function is as follows. Cell wall formation. Catalyzes the transfer of a GlcNAc subunit on undecaprenyl-pyrophosphoryl-MurNAc-pentapeptide (lipid intermediate I) to form undecaprenyl-pyrophosphoryl-MurNAc-(pentapeptide)GlcNAc (lipid intermediate II). The sequence is that of UDP-N-acetylglucosamine--N-acetylmuramyl-(pentapeptide) pyrophosphoryl-undecaprenol N-acetylglucosamine transferase from Helicobacter pylori (strain G27).